A 345-amino-acid chain; its full sequence is IGF-like family receptor 1 (345 aa).

A signal peptide spans 1–20 (MGPSWLLWTVAVAVLLLTRA). Residues 21 to 163 (ASMEASSFCG…SSRPGFVSAS (143 aa)) are Extracellular-facing. The N-linked (GlcNAc...) asparagine glycan is linked to N87. Residues 106 to 149 (VESPGRTHKQCRKKPVPPKDVCPLKPEDAGASSSPGRWSLGQTT) are disordered. The span at 111–121 (RTHKQCRKKPV) shows a compositional bias: basic residues. A compositionally biased stretch (polar residues) spans 136–149 (ASSSPGRWSLGQTT). A helical membrane pass occupies residues 164 to 184 (VLPLAVLPLLLVLLLILAVVL). Topologically, residues 185–345 (LSLFKRKVRS…DALQVLSKLG (161 aa)) are cytoplasmic.

As to expression, ubiquitously expressed with higher expression in lymph node. Highly expressed in T-cells and monocytes.

The protein resides in the cell membrane. In terms of biological role, probable cell membrane receptor for the IGF-like family protein IGFL. This chain is IGF-like family receptor 1 (Igflr1), found in Mus musculus (Mouse).